The chain runs to 322 residues: MRIVVLAGGIGGARFLRGLKDALHHRAEQGESPSSITVIGNTGDDITLFGLRVCPDLDTVMYTLGGGINEEQGWGRADETFTVREELIAYGMHPQWFGLGDRDIATHIVRSQMLAAGYPLSAITEALCDRWKPGVRLLPMTDDQVETHVVVADEKGRRAIHFQEWWVRYRAQIPAESFVSVGADSAKPAPGVLSAIDEADFVLFPPSNPVVSIGSILGIPGIRDAVAAKTVVGVSPIIGGAPVRGMADACLRTIGVETSARAVAEHYGADLLDGWLVDEADADTVVAGVEVRAMPLYMSDPERTAAIAGAAVDLALELKERS.

Asp58 lines the 7,8-didemethyl-8-hydroxy-5-deazariboflavin pocket.

The protein belongs to the CofD family. Homodimer. Mg(2+) is required as a cofactor.

It carries out the reaction enolpyruvoyl-2-diphospho-5'-guanosine + 7,8-didemethyl-8-hydroxy-5-deazariboflavin = dehydro coenzyme F420-0 + GMP + H(+). It participates in cofactor biosynthesis; coenzyme F420 biosynthesis. In terms of biological role, catalyzes the transfer of the phosphoenolpyruvate moiety from enoylpyruvoyl-2-diphospho-5'-guanosine (EPPG) to 7,8-didemethyl-8-hydroxy-5-deazariboflavin (FO) with the formation of dehydro coenzyme F420-0 and GMP. The protein is Phosphoenolpyruvate transferase of Thermobifida fusca (strain YX).